The primary structure comprises 132 residues: MIIGIGSDLCDIRRITRSLERFGDRFTHRVFTEGERARSDRRAARAPSYARRFAAKEACAKALGTGMAQGVFWRDMEVVNLPSGRPTLRLTGGAAAQLAAITPAGHRALVHVTLTDDPPLAQAFVVIEALPE.

Mg(2+) is bound by residues Asp-8 and Glu-57.

Belongs to the P-Pant transferase superfamily. AcpS family. It depends on Mg(2+) as a cofactor.

The protein localises to the cytoplasm. The enzyme catalyses apo-[ACP] + CoA = holo-[ACP] + adenosine 3',5'-bisphosphate + H(+). Transfers the 4'-phosphopantetheine moiety from coenzyme A to a Ser of acyl-carrier-protein. This chain is Holo-[acyl-carrier-protein] synthase, found in Methylobacterium nodulans (strain LMG 21967 / CNCM I-2342 / ORS 2060).